The primary structure comprises 232 residues: NKG2-D type II integral membrane protein (232 aa).

Topologically, residues 1-66 are cytoplasmic; that stretch reads MALIRDRKSH…IEKLKISPMF (66 aa). Residues 67–89 form a helical; Signal-anchor for type II membrane protein membrane-spanning segment; it reads VVRVLAIALAIRFTLNTLMWLAI. Over 90-232 the chain is Extracellular; the sequence is FKETFQPVLC…NTYICMKRAV (143 aa). 2 disulfide bridges follow: Cys112-Cys121 and Cys115-Cys126. A C-type lectin domain is found at 122 to 228; sequence HRNNCYQFFN…CANLNTYICM (107 aa). Residues Asn137, Asn147, and Asn179 are each glycosylated (N-linked (GlcNAc...) asparagine). Cystine bridges form between Cys143–Cys227 and Cys205–Cys219.

In terms of assembly, homodimer; disulfide-linked. Heterohexamer composed of two subunits of KLRK1 and four subunits of HCST/DAP10. Isoform 1 (via transmembrane domain) interacts with HCST/DAP10; the interaction is required for KLRK1 cell surface expression on activated CD8(+) T-cells, but is dispensable on activated TYROBP-expressing NK cells. Isoform 2 (via transmembrane domain) interacts with HCST/DAP10 (via transmembrane domain); the interaction is required for KLRK1 NK cell surface expression and induces NK cell-mediated cytotoxicity. Isoform 2 (via transmembrane domain) interacts with TYROBP (via transmembrane domain); the interaction is required for KLRK1 NK cell surface expression and induce NK cell-mediated cytotoxicity and cytokine secretion. Isoform 1 does not interact with TYROBP. Interacts with CEACAM1; recruits PTPN6 that dephosphorylates VAV1. In terms of tissue distribution, expressed in natural killer (NK) cells, activated CD8(+) alpha-beta and gamma-delta T-cells and natural killer T (NKT) cells (at protein level). May be expressed on dendritic cell (DC). Isoform 1 is strongly expressed in natural killer (NK) cells. Isoform 2 is weakly expressed in natural killer (NK) cells. Isoform 1 and isoform 2 are expressed in stimulated, but not in unstimulated, CD8(+) T-cells and macrophages.

It is found in the cell membrane. Functions as an activating and costimulatory receptor involved in immunosurveillance upon binding to various cellular stress-inducible ligands displayed at the surface of autologous tumor cells and virus-infected cells. Provides both stimulatory and costimulatory innate immune responses on activated killer (NK) cells, leading to cytotoxic activity. Acts as a costimulatory receptor for T-cell receptor (TCR) in CD8(+) T-cell-mediated adaptive immune responses by amplifying T-cell activation. Stimulates perforin-mediated elimination of ligand-expressing tumor cells. Signaling involves calcium influx, culminating in the expression of TNF-alpha. Participates in NK cell-mediated bone marrow graft rejection. May play a regulatory role in differentiation and survival of NK cells. Binds to ligands belonging to various subfamilies of MHC class I-related glycoproteins including RAET1A, RAET1B, RAET1C, RAET1D, RAET1E, H60 and MULT1. This chain is NKG2-D type II integral membrane protein (Klrk1), found in Mus musculus (Mouse).